Reading from the N-terminus, the 596-residue chain is Capsid protein VP1 (596 aa).

It belongs to the microviridae F protein family.

It localises to the virion. The protein localises to the host cytoplasm. Assembles to form an icosahedral capsid with a T=1 symmetry. The protein is Capsid protein VP1 of Chlamydia phage 1 (Bacteriophage Chp1).